A 116-amino-acid chain; its full sequence is NADH-quinone oxidoreductase subunit A (116 aa).

A run of 3 helical transmembrane segments spans residues 3–23 (FTLLVVVLLTAIAFVGVVIAL), 61–81 (FAILFLMFDVETVFLFPWAVI), and 88–108 (QGLISILFFLVVLVLGLAYAW).

This sequence belongs to the complex I subunit 3 family. NDH-1 is composed of 14 different subunits. Subunits NuoA, H, J, K, L, M, N constitute the membrane sector of the complex.

It is found in the cell inner membrane. The catalysed reaction is a quinone + NADH + 5 H(+)(in) = a quinol + NAD(+) + 4 H(+)(out). Its function is as follows. NDH-1 shuttles electrons from NADH, via FMN and iron-sulfur (Fe-S) centers, to quinones in the respiratory chain. The immediate electron acceptor for the enzyme in this species is believed to be a menaquinone. Couples the redox reaction to proton translocation (for every two electrons transferred, four hydrogen ions are translocated across the cytoplasmic membrane), and thus conserves the redox energy in a proton gradient. This Bacteroides fragilis (strain ATCC 25285 / DSM 2151 / CCUG 4856 / JCM 11019 / LMG 10263 / NCTC 9343 / Onslow / VPI 2553 / EN-2) protein is NADH-quinone oxidoreductase subunit A.